The following is a 523-amino-acid chain: Nuclear receptor ROR-alpha (523 aa).

A compositionally biased stretch (low complexity) spans 1 to 26; the sequence is MESAPAAPDPAASEPGSSGADAAAGS. Residues 1–63 form a disordered region; that stretch reads MESAPAAPDP…SRGISVTKKT (63 aa). Lysine 38 bears the N6-methyllysine mark. Residues 48 to 57 are compositionally biased toward polar residues; that stretch reads QSYSSTSRGI. NR C4-type zinc fingers lie at residues 73 to 93 and 109 to 133; these read CKIC…CEGC and CPRQ…LQKC. The nuclear receptor DNA-binding region spans 73 to 138; it reads CKICGDKSSG…RLQKCLAVGM (66 aa). A disordered region spans residues 154–183; it reads DSLYAEVQKHRMQQQQRDHQQQPGEAEPLT. Residue threonine 183 is modified to Phosphothreonine; by MAPK1. Lysine 240 participates in a covalent cross-link: Glycyl lysine isopeptide (Lys-Gly) (interchain with G-Cter in SUMO). One can recognise an NR LBD domain in the interval 272 to 510; the sequence is ELEHLAQNIS…LHFPPLYKEL (239 aa). An AF-2 motif is present at residues 506 to 523; the sequence is LYKELFTSEFEPAMQIDG.

Belongs to the nuclear hormone receptor family. NR1 subfamily. As to quaternary structure, monomer. Interacts (via the DNA-binding domain) with HIF1A; the interaction enhances HIF1A transcription under hypoxia through increasing protein stability. Interacts with CEBPB; the interaction disrupts the interaction CEBPB:EP300. Interacts with the coactivators NCOA2, PPARGC1A (via LXXLL motif), EP300 and MED1. Interacts with the corepressor NCOR1. Interacts with MAGED1 and CTNNB1. Interacts with CRY1 and PER2. Interacts (via AF-2 motif) with PROX1. Interacts with NRIP1. Isoform 4 interacts (via AF-2 motif) with isoform 1 of FOXP3 (via LXXLL motif). In terms of processing, phosphorylation by conventional PKCs in neurons inhibits transcriptional activity. Phosphorylated on Thr-183 by MAPK1/ERK1 in vitro. Sumoylated by SENP1 and SENP2. Sumoylation, promoted by PIAS2, PIAS3, PIAS4 but not PIAS1, enhances the transcriptional activity. Desumoylated by SENP1. Post-translationally, ubiquitinated, leading to its degradation by the proteasome. Proteasomal degradation is required for efficient transcriptional activity and is prevented by HR. In terms of processing, monomethylated at Lys-38 by EZH2, this creates a degron recognized by a DCX (DDB1-DCAF1/VPRBP-CUL4A-RBX1) E3 ubiquitin ligase complex. In terms of tissue distribution, widely expressed in a number of tissues. Expressed in both regulatory T-cells (Treg) and effector T-cells (Teff). Isoform 4: Highly expressed in the central nervous system, including in the cerebellum.

It is found in the nucleus. Its function is as follows. Nuclear receptor that binds DNA as a monomer to ROR response elements (RORE) containing a single core motif half-site 5'-AGGTCA-3' preceded by a short A-T-rich sequence. Key regulator of embryonic development, cellular differentiation, immunity, circadian rhythm as well as lipid, steroid, xenobiotics and glucose metabolism. Considered to have intrinsic transcriptional activity, have some natural ligands like oxysterols that act as agonists (25-hydroxycholesterol) or inverse agonists (7-oxygenated sterols), enhancing or repressing the transcriptional activity, respectively. Recruits distinct combinations of cofactors to target genes regulatory regions to modulate their transcriptional expression, depending on the tissue, time and promoter contexts. Regulates genes involved in photoreceptor development including OPN1SW, OPN1SM and ARR3 and skeletal muscle development with MYOD1. Required for proper cerebellum development. Regulates SHH gene expression, among others, to induce granule cells proliferation as well as expression of genes involved in calcium-mediated signal transduction. Regulates the circadian expression of several clock genes, including CLOCK, BMAL1, NPAS2 and CRY1. Competes with NR1D1 for binding to their shared DNA response element on some clock genes such as BMAL1, CRY1 and NR1D1 itself, resulting in NR1D1-mediated repression or RORA-mediated activation of clock genes expression, leading to the circadian pattern of clock genes expression. Therefore influences the period length and stability of the clock. Regulates genes involved in lipid metabolism such as apolipoproteins APOA1, APOA5, APOC3 and PPARG. In liver, has specific and redundant functions with RORC as positive or negative modulator of expression of genes encoding phase I and phase II proteins involved in the metabolism of lipids, steroids and xenobiotics, such as CYP7B1 and SULT2A1. Induces a rhythmic expression of some of these genes. In addition, interplays functionally with NR1H2 and NR1H3 for the regulation of genes involved in cholesterol metabolism. Also involved in the regulation of hepatic glucose metabolism through the modulation of G6PC1 and PCK1. In adipose tissue, plays a role as negative regulator of adipocyte differentiation, probably acting through dual mechanisms. May suppress CEBPB-dependent adipogenesis through direct interaction and PPARG-dependent adipogenesis through competition for DNA-binding. Downstream of IL6 and TGFB and synergistically with RORC isoform 2, is implicated in the lineage specification of uncommitted CD4(+) T-helper (T(H)) cells into T(H)17 cells, antagonizing the T(H)1 program. Probably regulates IL17 and IL17F expression on T(H) by binding to the essential enhancer conserved non-coding sequence 2 (CNS2) in the IL17-IL17F locus. Involved in hypoxia signaling by interacting with and activating the transcriptional activity of HIF1A. May inhibit cell growth in response to cellular stress. May exert an anti-inflammatory role by inducing CHUK expression and inhibiting NF-kappa-B signaling. This Homo sapiens (Human) protein is Nuclear receptor ROR-alpha (RORA).